Consider the following 323-residue polypeptide: Serine/threonine-protein phosphatase PP1-gamma catalytic subunit (323 aa).

The residue at position 2 (A2) is an N-acetylalanine. D64, H66, D92, and N124 together coordinate Mn(2+). H125 acts as the Proton donor in catalysis. Residues H173 and H248 each contribute to the Mn(2+) site. Phosphothreonine occurs at positions 307 and 311.

This sequence belongs to the PPP phosphatase family. PP-1 subfamily. In terms of assembly, PP1 comprises a catalytic subunit, PPP1CA, PPP1CB or PPP1CC, which is folded into its native form by inhibitor 2 and glycogen synthetase kinase 3, and then complexed to one or several targeting or regulatory subunits. PPP1R12A, PPP1R12B and PPP1R12C mediate binding to myosin. PPP1R3A (in skeletal muscle), PPP1R3B (in liver), PPP1R3C, PPP1R3D and PPP1R3F (in brain) mediate binding to glycogen. PPP1R15A and PPP1R15B mediate binding to EIF2S1. Part of a complex containing PPP1R15B, PP1 and NCK1/2. Interacts with PPP1R3B, PPP1R7 and CDCA2. Interacts with IKFZ1; the interaction targets PPP1CC to pericentromeric heterochromatin, dephosphorylates IKAROS, stabilizes it and prevents it from degradation. Interacts with NOM1 and PPP1R8. Component of the PTW/PP1 phosphatase complex, composed of PPP1R10/PNUTS, TOX4, WDR82, and PPP1CA or PPP1CB or PPP1CC. Interacts with PPP1R8. Interacts with NEK2. Interacts with PPP1R42; the interaction is direct. Interacts with URI1; the interaction is phosphorylation-dependent and occurs in a growth factor-dependent manner. Interacts with FOXP3. Interacts with TMEM225 (via RVxF motif). Interacts with MKI67. Interacts with RRP1B; this targets PPP1CC to the nucleolus. Interacts with DYNLT4. Interacts (via RVxF motif) with FIRRM; regulates PLK1 kinase activity. Interacts with the KNL1 complex subunit KNL1; the interaction is direct and mutually exclusive with KNL1 binding to microtubules. Component of the SHOC2-MRAS-PP1c (SMP) complex consisting of SHOC2, GTP-bound M-Ras/MRAS and the catalytic subunit of protein phosphatase 1 (either PPP1CA, PPP1CB or PPP1CC). SHOC2 and PP1c preferably bind M-Ras/MRAS, but they also bind K-Ras/KRAS, N-Ras/NRAS and H-Ras/HRAS; these interactions are GTP-dependent and both SHOC2 and PP1c are required to form a stable complex. Interacts with SHOC2 in the absence of Ras GTPases. It depends on Mn(2+) as a cofactor. In terms of processing, phosphorylated by NEK2.

The protein resides in the cytoplasm. Its subcellular location is the nucleus. It localises to the cleavage furrow. The protein localises to the nucleolus. It is found in the nucleoplasm. The protein resides in the chromosome. Its subcellular location is the centromere. It localises to the kinetochore. The protein localises to the nucleus speckle. It is found in the midbody. The protein resides in the mitochondrion. Its subcellular location is the cytoskeleton. It localises to the microtubule organizing center. The enzyme catalyses O-phospho-L-seryl-[protein] + H2O = L-seryl-[protein] + phosphate. It catalyses the reaction O-phospho-L-threonyl-[protein] + H2O = L-threonyl-[protein] + phosphate. With respect to regulation, inactivated by binding to URI1. Its function is as follows. Protein phosphatase that associates with over 200 regulatory proteins to form highly specific holoenzymes which dephosphorylate hundreds of biological targets. Protein phosphatase 1 (PP1) is essential for cell division, and participates in the regulation of glycogen metabolism, muscle contractility and protein synthesis. Dephosphorylates RPS6KB1. Involved in regulation of ionic conductances and long-term synaptic plasticity. May play an important role in dephosphorylating substrates such as the postsynaptic density-associated Ca(2+)/calmodulin dependent protein kinase II. Component of the PTW/PP1 phosphatase complex, which plays a role in the control of chromatin structure and cell cycle progression during the transition from mitosis into interphase. Regulates the recruitment of the SKA complex to kinetochores. Core component of the SHOC2-MRAS-PP1c (SMP) holophosphatase complex that regulates the MAPK pathway activation. Dephosphorylates MKI67 at the onset of anaphase. The SMP complex specifically dephosphorylates the inhibitory phosphorylation at 'Ser-259' of RAF1 kinase, 'Ser-365' of BRAF kinase and 'Ser-214' of ARAF kinase, stimulating their kinase activities. The SMP complex enhances the dephosphorylation activity and substrate specificity of PP1c. This is Serine/threonine-protein phosphatase PP1-gamma catalytic subunit (PPP1CC) from Canis lupus familiaris (Dog).